A 375-amino-acid chain; its full sequence is MENFPTEYFLNTSVRLLEYIRYRDSNYTREERIENLHYAYNKAAHHFAQPRQQQMLKVDPKRLQASLQTIVGMVVYSWAKVSKECMADLSIHYTYTLVLDDSSDDPHPAMLNYFDDLQAGREQAHPWWALVNEHFPNVLRHFGPFCSLNLIRSTMDFFEGCWIEQYNFGGFPGSDDYPQFLRRMNGLGHCVGASLWPKELFDERKNFLEITTAVAQMENWMVWVNDLMSFYKEFDDERDQISLVKNFVTCHEITLDEALEKLTQETLHSSKQMVAVFADKDPQVMDTIECFMHGYVTWHLCDARYRLHEIYEKVKDQDTEDAKKFCKFFEQAANVGAVAPSEWAYPQVAHLANVRAKGDVKEAQKPILSSIELVE.

The protein belongs to the trichodiene synthase family.

The enzyme catalyses (2E,6E)-farnesyl diphosphate = trichodiene + diphosphate. It functions in the pathway sesquiterpene biosynthesis; trichothecene biosynthesis. TS is a member of the terpene cyclase group of enzymes. It catalyzes the isomerization and cyclization of farnesyl pyro-phosphate to form trichodiene, the first cyclic intermediate in the biosynthetic pathway for trichothecenes. It serves to branch trichothecene biosynthesis from the isoprenoid pathway. The chain is Trichodiene synthase (TRI5) from Fusarium asiaticum.